The sequence spans 1733 residues: Protein NETWORKED 1D (1733 aa).

The region spanning 12 to 92 is the NAB domain; it reads YSWWWDSHIS…ERYDHATGVI (81 aa). Coiled coils occupy residues 195 to 816, 897 to 931, 960 to 1043, and 1196 to 1386; these read KEIN…RESS, LIAE…QIDS, DENS…QKLI, and ARSA…NDLM. Residues 1456–1476 are disordered; that stretch reads LKTSSARRSRRRNGSLRKQNH. Over residues 1460–1470 the composition is skewed to basic residues; it reads SARRSRRRNGS. 2 coiled-coil regions span residues 1553 to 1627 and 1653 to 1686; these read ANKR…KVQN and SEQA…DRED. Residues 1628 to 1656 are disordered; that stretch reads GFERSDGSKSSMDLDENESSRRRRISEQA.

Belongs to the NET family.

In terms of biological role, plant-specific actin binding protein. May be part of a membrane-cytoskeletal adapter complex. In Arabidopsis thaliana (Mouse-ear cress), this protein is Protein NETWORKED 1D.